Here is a 432-residue protein sequence, read N- to C-terminus: Alcohol acyltransferase 9 (432 aa).

Residues H156 and D379 each act as proton acceptor in the active site.

The protein belongs to the plant acyltransferase family.

It carries out the reaction 2-(methylsulfanyl)acetyl-CoA + butan-1-ol = butyl 2-(methylsulfanyl)acetate + CoA. It catalyses the reaction ethanol + acetyl-CoA = ethyl acetate + CoA. The enzyme catalyses butan-1-ol + acetyl-CoA = butyl acetate + CoA. The catalysed reaction is butan-1-ol + propanoyl-CoA = butyl propanoate + CoA. In terms of biological role, involved in the biosynthesis of volatile esters which confer kiwifruit flavor. Alcohol acyl transferase that can use a wide range of alcohols as substrate to produce esters. Exhibits acetyl-CoA:alcohol O-acyltransferase activity. The protein is Alcohol acyltransferase 9 of Actinidia chinensis var. chinensis (Chinese soft-hair kiwi).